A 75-amino-acid chain; its full sequence is Kappa-thalatoxin-Tas2a (75 aa).

The first 22 residues, 1-22 (MKFQMIAAVLLIAFCLSVVVTA), serve as a signal peptide directing secretion. A propeptide spanning residues 23–40 (RMELQDDEEMKNGSFQKR) is cleaved from the precursor. In terms of domain architecture, ShKT spans 43 to 75 (CIDTIPKSRCTAFQCKHSMKYRLSFCRKTCGTC). Intrachain disulfides connect C43–C75, C52–C68, and C57–C72.

The protein belongs to the sea anemone type 1 potassium channel toxin family. Type 1a subfamily.

It localises to the secreted. The protein localises to the nematocyst. Inhibits voltage-gated potassium channels (Kv) with higher potency for Kv1.1/KCNA1 and Kv1.3/KCNA3 (IC(50)=3.4 nM). The chain is Kappa-thalatoxin-Tas2a from Thalassianthus aster (Fuzzy-tipped anemone).